The primary structure comprises 279 residues: DegV domain-containing protein lin1977 (279 aa).

Positions 4 to 278 (IKIITDSTAG…TGAFAFMYYT (275 aa)) constitute a DegV domain. Residues serine 62 and serine 94 each coordinate hexadecanoate.

Its function is as follows. May bind long-chain fatty acids, such as palmitate, and may play a role in lipid transport or fatty acid metabolism. This is DegV domain-containing protein lin1977 from Listeria innocua serovar 6a (strain ATCC BAA-680 / CLIP 11262).